The chain runs to 571 residues: Urease subunit alpha (571 aa).

The 439-residue stretch at glycine 133–phenylalanine 571 folds into the Urease domain. The Ni(2+) site is built by histidine 138, histidine 140, and lysine 221. At lysine 221 the chain carries N6-carboxylysine. Position 223 (histidine 223) interacts with substrate. The Ni(2+) site is built by histidine 250 and histidine 276. The Proton donor role is filled by histidine 324. Position 364 (aspartate 364) interacts with Ni(2+).

It belongs to the metallo-dependent hydrolases superfamily. Urease alpha subunit family. As to quaternary structure, heterotrimer of UreA (gamma), UreB (beta) and UreC (alpha) subunits. Three heterotrimers associate to form the active enzyme. It depends on Ni cation as a cofactor. Carboxylation allows a single lysine to coordinate two nickel ions.

It localises to the cytoplasm. It catalyses the reaction urea + 2 H2O + H(+) = hydrogencarbonate + 2 NH4(+). It functions in the pathway nitrogen metabolism; urea degradation; CO(2) and NH(3) from urea (urease route): step 1/1. This chain is Urease subunit alpha, found in Staphylococcus saprophyticus subsp. saprophyticus (strain ATCC 15305 / DSM 20229 / NCIMB 8711 / NCTC 7292 / S-41).